Consider the following 103-residue polypeptide: MSLLEQVSVSKKANIYFDGKVASRSVFFADGSKQTLGVVQPGEYEFSTSQGEIMEVISGRFEVLLPETTTWQEFSEGTQFELAANVSFKIRNTAIAEYCCSYL.

The protein belongs to the nucleoside phosphorylase PpnP family.

It carries out the reaction a purine D-ribonucleoside + phosphate = a purine nucleobase + alpha-D-ribose 1-phosphate. It catalyses the reaction adenosine + phosphate = alpha-D-ribose 1-phosphate + adenine. The enzyme catalyses cytidine + phosphate = cytosine + alpha-D-ribose 1-phosphate. The catalysed reaction is guanosine + phosphate = alpha-D-ribose 1-phosphate + guanine. It carries out the reaction inosine + phosphate = alpha-D-ribose 1-phosphate + hypoxanthine. It catalyses the reaction thymidine + phosphate = 2-deoxy-alpha-D-ribose 1-phosphate + thymine. The enzyme catalyses uridine + phosphate = alpha-D-ribose 1-phosphate + uracil. The catalysed reaction is xanthosine + phosphate = alpha-D-ribose 1-phosphate + xanthine. Functionally, catalyzes the phosphorolysis of diverse nucleosides, yielding D-ribose 1-phosphate and the respective free bases. Can use uridine, adenosine, guanosine, cytidine, thymidine, inosine and xanthosine as substrates. Also catalyzes the reverse reactions. The sequence is that of Pyrimidine/purine nucleoside phosphorylase from Shewanella baltica (strain OS195).